Here is a 690-residue protein sequence, read N- to C-terminus: Ectopic P granules protein 2 (690 aa).

4 coiled-coil regions span residues 20–181 (IELA…EREV), 359–409 (ELLR…TIQE), 458–494 (LESG…SLLL), and 560–643 (ATIE…ETKR). The LIR 1 motif lies at 61–64 (YSTL). Residues 381–385 (DFKIL) form a required for interaction with lgg-1 region. The interval 666–690 (EELDEEPKASTESEEKAEWEMVDEE) is disordered. Positions 671–684 (EPKASTESEEKAEW) are enriched in basic and acidic residues. An LIR 2 motif is present at residues 684 to 687 (WEMV).

As to quaternary structure, interacts with sepa-1. Interacts (via the LIR motifs) with lgg-1 and lgg-2. Shows strong interaction with lgg-1 and weak interaction with lgg-2.

Its subcellular location is the cytoplasm. Functionally, involved in autophagy. Thought to act as an adapter protein that brings PGL granules to autophagic structures containing lgg-1. Association with other adapters such as sepa-1 is required for the accumulation and degradation of germ cell specific P-granules by autophagy in somatic cells. This ensures exclusive localization of the P-granules in germ cells. May also play a role in the removal of sepa-1 from somatic cells. The chain is Ectopic P granules protein 2 from Caenorhabditis elegans.